We begin with the raw amino-acid sequence, 172 residues long: Photosystem I assembly protein Ycf3 (172 aa).

TPR repeat units lie at residues 35 to 68, 72 to 105, and 120 to 153; these read AFSY…EEDP, SYIL…NSQL, and GVKA…SPNN.

Belongs to the Ycf3 family.

The protein localises to the plastid. Its subcellular location is the chloroplast thylakoid membrane. Its function is as follows. Essential for the assembly of the photosystem I (PSI) complex. May act as a chaperone-like factor to guide the assembly of the PSI subunits. The protein is Photosystem I assembly protein Ycf3 of Guillardia theta (Cryptophyte).